The following is a 220-amino-acid chain: Putative vesicle-associated membrane protein 726 (220 aa).

The Cytoplasmic portion of the chain corresponds to Met-1–Leu-196. One can recognise a Longin domain in the interval Phe-10 to Leu-114. The 61-residue stretch at Lys-130–Glu-190 folds into the v-SNARE coiled-coil homology domain. Residues Ile-197–Phe-217 traverse the membrane as a helical; Anchor for type IV membrane protein segment. Topologically, residues Lys-218–Thr-220 are vesicular.

The protein belongs to the synaptobrevin family. Expressed in flowers, leaves, stems and roots.

It localises to the cell membrane. The protein resides in the early endosome membrane. In terms of biological role, involved in the targeting and/or fusion of transport vesicles to their target membrane. The polypeptide is Putative vesicle-associated membrane protein 726 (VAMP726) (Arabidopsis thaliana (Mouse-ear cress)).